Reading from the N-terminus, the 450-residue chain is Glutamate--tRNA ligase 1 (450 aa).

The 'HIGH' region signature appears at 7–17; sequence PSPTGYMHVGN. Positions 236-240 match the 'KMSKS' region motif; the sequence is KISKR. Position 239 (lysine 239) interacts with ATP.

This sequence belongs to the class-I aminoacyl-tRNA synthetase family. Glutamate--tRNA ligase type 1 subfamily. Monomer.

Its subcellular location is the cytoplasm. The catalysed reaction is tRNA(Glu) + L-glutamate + ATP = L-glutamyl-tRNA(Glu) + AMP + diphosphate. Its function is as follows. Catalyzes the attachment of glutamate to tRNA(Glu) in a two-step reaction: glutamate is first activated by ATP to form Glu-AMP and then transferred to the acceptor end of tRNA(Glu). The sequence is that of Glutamate--tRNA ligase 1 from Anaplasma phagocytophilum (strain HZ).